Here is an 84-residue protein sequence, read N- to C-terminus: ATP synthase subunit c (84 aa).

The next 2 helical transmembrane spans lie at 9–29 and 57–77; these read LGLA…GCGI and ILGL…NLII.

The protein belongs to the ATPase C chain family. As to quaternary structure, F-type ATPases have 2 components, F(1) - the catalytic core - and F(0) - the membrane proton channel. F(1) has five subunits: alpha(3), beta(3), gamma(1), delta(1), epsilon(1). F(0) has three main subunits: a(1), b(2) and c(10-14). The alpha and beta chains form an alternating ring which encloses part of the gamma chain. F(1) is attached to F(0) by a central stalk formed by the gamma and epsilon chains, while a peripheral stalk is formed by the delta and b chains.

It localises to the cell membrane. F(1)F(0) ATP synthase produces ATP from ADP in the presence of a proton or sodium gradient. F-type ATPases consist of two structural domains, F(1) containing the extramembraneous catalytic core and F(0) containing the membrane proton channel, linked together by a central stalk and a peripheral stalk. During catalysis, ATP synthesis in the catalytic domain of F(1) is coupled via a rotary mechanism of the central stalk subunits to proton translocation. Its function is as follows. Key component of the F(0) channel; it plays a direct role in translocation across the membrane. A homomeric c-ring of between 10-14 subunits forms the central stalk rotor element with the F(1) delta and epsilon subunits. The polypeptide is ATP synthase subunit c (Lawsonia intracellularis (strain PHE/MN1-00)).